Here is a 284-residue protein sequence, read N- to C-terminus: Bifunctional protein FolD (284 aa).

Residues 166–168 (GRS) and Ser191 each bind NADP(+).

The protein belongs to the tetrahydrofolate dehydrogenase/cyclohydrolase family. Homodimer.

The catalysed reaction is (6R)-5,10-methylene-5,6,7,8-tetrahydrofolate + NADP(+) = (6R)-5,10-methenyltetrahydrofolate + NADPH. It carries out the reaction (6R)-5,10-methenyltetrahydrofolate + H2O = (6R)-10-formyltetrahydrofolate + H(+). The protein operates within one-carbon metabolism; tetrahydrofolate interconversion. Functionally, catalyzes the oxidation of 5,10-methylenetetrahydrofolate to 5,10-methenyltetrahydrofolate and then the hydrolysis of 5,10-methenyltetrahydrofolate to 10-formyltetrahydrofolate. The chain is Bifunctional protein FolD from Leptospira interrogans serogroup Icterohaemorrhagiae serovar copenhageni (strain Fiocruz L1-130).